The chain runs to 801 residues: Leucine--tRNA ligase (801 aa).

A 'HIGH' region motif is present at residues 40-51 (PYPSGAGLHVGH). Residues 576 to 580 (KMSKS) carry the 'KMSKS' region motif. Lysine 579 serves as a coordination point for ATP.

The protein belongs to the class-I aminoacyl-tRNA synthetase family.

It is found in the cytoplasm. It catalyses the reaction tRNA(Leu) + L-leucine + ATP = L-leucyl-tRNA(Leu) + AMP + diphosphate. The sequence is that of Leucine--tRNA ligase from Exiguobacterium sibiricum (strain DSM 17290 / CCUG 55495 / CIP 109462 / JCM 13490 / 255-15).